Consider the following 678-residue polypeptide: DNA ligase (678 aa).

NAD(+) is bound by residues 32 to 36 (DSEYD), 81 to 82 (SL), and Glu113. The active-site N6-AMP-lysine intermediate is Lys115. NAD(+)-binding residues include Arg136, Glu174, Lys291, and Lys315. 4 residues coordinate Zn(2+): Cys409, Cys412, Cys427, and Cys433. The 83-residue stretch at 596-678 (ASDNPFAGKT…MRLLGESSDA (83 aa)) folds into the BRCT domain.

This sequence belongs to the NAD-dependent DNA ligase family. LigA subfamily. The cofactor is Mg(2+). Requires Mn(2+) as cofactor.

It catalyses the reaction NAD(+) + (deoxyribonucleotide)n-3'-hydroxyl + 5'-phospho-(deoxyribonucleotide)m = (deoxyribonucleotide)n+m + AMP + beta-nicotinamide D-nucleotide.. Its function is as follows. DNA ligase that catalyzes the formation of phosphodiester linkages between 5'-phosphoryl and 3'-hydroxyl groups in double-stranded DNA using NAD as a coenzyme and as the energy source for the reaction. It is essential for DNA replication and repair of damaged DNA. This is DNA ligase from Sodalis glossinidius (strain morsitans).